The following is an 89-amino-acid chain: Small ribosomal subunit protein uS15 (89 aa).

Belongs to the universal ribosomal protein uS15 family. As to quaternary structure, part of the 30S ribosomal subunit. Forms a bridge to the 50S subunit in the 70S ribosome, contacting the 23S rRNA.

In terms of biological role, one of the primary rRNA binding proteins, it binds directly to 16S rRNA where it helps nucleate assembly of the platform of the 30S subunit by binding and bridging several RNA helices of the 16S rRNA. Functionally, forms an intersubunit bridge (bridge B4) with the 23S rRNA of the 50S subunit in the ribosome. In Bradyrhizobium sp. (strain BTAi1 / ATCC BAA-1182), this protein is Small ribosomal subunit protein uS15.